The following is a 452-amino-acid chain: Bifunctional protein GlmU (452 aa).

A pyrophosphorylase region spans residues 1 to 226; it reads MSLTTVILAA…PMEVEGANNR (226 aa). Residues 8–11, lysine 22, glutamine 73, 78–79, 100–102, glycine 137, glutamate 151, asparagine 166, and asparagine 224 each bind UDP-N-acetyl-alpha-D-glucosamine; these read LAAG, GT, and YGD. Aspartate 102 lines the Mg(2+) pocket. Asparagine 224 contacts Mg(2+). A linker region spans residues 227-247; the sequence is IQLAGLERAYQAWQAQELMLN. The segment at 248 to 452 is N-acetyltransferase; it reads GATLADPARI…LDGWKRPVKK (205 aa). Residues arginine 330 and lysine 348 each contribute to the UDP-N-acetyl-alpha-D-glucosamine site. The Proton acceptor role is filled by histidine 360. Positions 363 and 374 each coordinate UDP-N-acetyl-alpha-D-glucosamine. Residues alanine 377, 383 to 384, serine 402, alanine 420, and arginine 437 each bind acetyl-CoA; that span reads NY.

It in the N-terminal section; belongs to the N-acetylglucosamine-1-phosphate uridyltransferase family. The protein in the C-terminal section; belongs to the transferase hexapeptide repeat family. Homotrimer. Requires Mg(2+) as cofactor.

It is found in the cytoplasm. The catalysed reaction is alpha-D-glucosamine 1-phosphate + acetyl-CoA = N-acetyl-alpha-D-glucosamine 1-phosphate + CoA + H(+). The enzyme catalyses N-acetyl-alpha-D-glucosamine 1-phosphate + UTP + H(+) = UDP-N-acetyl-alpha-D-glucosamine + diphosphate. Its pathway is nucleotide-sugar biosynthesis; UDP-N-acetyl-alpha-D-glucosamine biosynthesis; N-acetyl-alpha-D-glucosamine 1-phosphate from alpha-D-glucosamine 6-phosphate (route II): step 2/2. The protein operates within nucleotide-sugar biosynthesis; UDP-N-acetyl-alpha-D-glucosamine biosynthesis; UDP-N-acetyl-alpha-D-glucosamine from N-acetyl-alpha-D-glucosamine 1-phosphate: step 1/1. It participates in bacterial outer membrane biogenesis; LPS lipid A biosynthesis. Functionally, catalyzes the last two sequential reactions in the de novo biosynthetic pathway for UDP-N-acetylglucosamine (UDP-GlcNAc). The C-terminal domain catalyzes the transfer of acetyl group from acetyl coenzyme A to glucosamine-1-phosphate (GlcN-1-P) to produce N-acetylglucosamine-1-phosphate (GlcNAc-1-P), which is converted into UDP-GlcNAc by the transfer of uridine 5-monophosphate (from uridine 5-triphosphate), a reaction catalyzed by the N-terminal domain. The sequence is that of Bifunctional protein GlmU from Pseudoalteromonas translucida (strain TAC 125).